The chain runs to 2410 residues: Genome polyprotein 1 (2410 aa).

The segment at 1-22 (MEQTLAQAVSRKSKTDTPMAEE) is disordered. In terms of domain architecture, Helicase ATP-binding spans 474-632 (KMADANNCWS…AARKYPLHVE (159 aa)). An ATP-binding site is contributed by 487–494 (GHTGSGKS). In terms of domain architecture, Helicase C-terminal spans 647 to 813 (GGGDLLDISK…NVPFYMNETF (167 aa)). Tyrosine 1234 is modified (O-(5'-phospho-RNA)-tyrosine). The 215-residue stretch at 1359–1573 (ITLEASTGIL…CGYASHTALF (215 aa)) folds into the Peptidase C4 domain. Active-site for nuclear inclusion protein A activity residues include histidine 1404, aspartate 1440, and cysteine 1507. Residues 1857-1980 (WLHGSGDGSR…AISPQFDEEF (124 aa)) enclose the RdRp catalytic domain. The interval 2173-2200 (TRTPTEDDGKLKTPSGARIPSSAADGNW) is disordered.

Belongs to the bymoviruses polyprotein 1 family. VPg is uridylylated by the polymerase and is covalently attached to the 5'-end of the genomic RNA. This uridylylated form acts as a nucleotide-peptide primer for the polymerase. Post-translationally, the viral RNA1 of bymoviruses is expressed as a single polyprotein which undergoes post-translational proteolytic processing by the main proteinase NIa-pro resulting in the production of at least eight individual proteins.

The protein localises to the host cytoplasmic vesicle. It is found in the virion. The catalysed reaction is RNA(n) + a ribonucleoside 5'-triphosphate = RNA(n+1) + diphosphate. The enzyme catalyses Hydrolyzes glutaminyl bonds, and activity is further restricted by preferences for the amino acids in P6 - P1' that vary with the species of potyvirus, e.g. Glu-Xaa-Xaa-Tyr-Xaa-Gln-|-(Ser or Gly) for the enzyme from tobacco etch virus. The natural substrate is the viral polyprotein, but other proteins and oligopeptides containing the appropriate consensus sequence are also cleaved.. Indispensable for virus replication. Functionally, mediates the cap-independent, EIF4E-dependent translation of viral genomic RNAs. Binds to the cap-binding site of host EIF4E and thus interferes with the host EIF4E-dependent mRNA export and translation. VPg-RNA directly binds EIF4E and is a template for transcription. Also forms trimeric complexes with EIF4E-EIF4G, which are templates for translation. In terms of biological role, has RNA-binding and proteolytic activities. Its function is as follows. An RNA-dependent RNA polymerase that plays an essential role in the virus replication. The protein is Genome polyprotein 1 of Hordeum vulgare (Barley).